The sequence spans 401 residues: tRNA-specific 2-thiouridylase MnmA (401 aa).

Residues 13–20 (GLSGGVDS) and M39 contribute to the ATP site. The tract at residues 99 to 101 (NPD) is interaction with target base in tRNA. C104 serves as the catalytic Nucleophile. C104 and C202 are disulfide-bonded. Residue G128 participates in ATP binding. The tract at residues 152–154 (KDQ) is interaction with tRNA. The Cysteine persulfide intermediate role is filled by C202. The segment at 329-330 (RY) is interaction with tRNA.

It belongs to the MnmA/TRMU family.

The protein localises to the cytoplasm. The enzyme catalyses S-sulfanyl-L-cysteinyl-[protein] + uridine(34) in tRNA + AH2 + ATP = 2-thiouridine(34) in tRNA + L-cysteinyl-[protein] + A + AMP + diphosphate + H(+). Catalyzes the 2-thiolation of uridine at the wobble position (U34) of tRNA, leading to the formation of s(2)U34. The polypeptide is tRNA-specific 2-thiouridylase MnmA (Polaromonas sp. (strain JS666 / ATCC BAA-500)).